We begin with the raw amino-acid sequence, 239 residues long: Pathogenesis-related protein 5 (239 aa).

Residues 1-23 form the signal peptide; that stretch reads MANISSIHILFLVFITSGIAVMA. Intrachain disulfides connect cysteine 32–cysteine 238, cysteine 79–cysteine 89, cysteine 94–cysteine 99, cysteine 146–cysteine 228, cysteine 151–cysteine 211, cysteine 159–cysteine 174, cysteine 178–cysteine 187, and cysteine 188–cysteine 198.

The protein belongs to the thaumatin family.

Its subcellular location is the secreted. The protein resides in the extracellular space. The protein localises to the apoplast. In terms of biological role, partially responsible for acquired pathogen resistance. The polypeptide is Pathogenesis-related protein 5 (Arabidopsis thaliana (Mouse-ear cress)).